Here is a 302-residue protein sequence, read N- to C-terminus: Glycine--tRNA ligase alpha subunit (302 aa).

The protein belongs to the class-II aminoacyl-tRNA synthetase family. As to quaternary structure, tetramer of two alpha and two beta subunits.

It localises to the cytoplasm. It catalyses the reaction tRNA(Gly) + glycine + ATP = glycyl-tRNA(Gly) + AMP + diphosphate. The polypeptide is Glycine--tRNA ligase alpha subunit (Xanthomonas oryzae pv. oryzae (strain PXO99A)).